A 365-amino-acid chain; its full sequence is S-adenosylmethionine:tRNA ribosyltransferase-isomerase (365 aa).

The protein belongs to the QueA family. Monomer.

The protein localises to the cytoplasm. It catalyses the reaction 7-aminomethyl-7-carbaguanosine(34) in tRNA + S-adenosyl-L-methionine = epoxyqueuosine(34) in tRNA + adenine + L-methionine + 2 H(+). It functions in the pathway tRNA modification; tRNA-queuosine biosynthesis. In terms of biological role, transfers and isomerizes the ribose moiety from AdoMet to the 7-aminomethyl group of 7-deazaguanine (preQ1-tRNA) to give epoxyqueuosine (oQ-tRNA). In Rickettsia rickettsii (strain Iowa), this protein is S-adenosylmethionine:tRNA ribosyltransferase-isomerase.